The following is a 67-amino-acid chain: Medusin-S1 (67 aa).

The N-terminal stretch at 1-22 is a signal peptide; sequence MSFLKKSLFLVLFLGFVSLSIC. Positions 23–48 are excised as a propeptide; it reads EEEKRETEEKENEQEDDREERSEEKR. Residues 26 to 47 form a disordered region; the sequence is KRETEEKENEQEDDREERSEEK. Residues 31–40 are compositionally biased toward acidic residues; that stretch reads EKENEQEDDR. The residue at position 66 (L66) is a Leucine amide.

This sequence belongs to the frog skin active peptide (FSAP) family. Medusin subfamily. As to expression, expressed by the skin glands.

It is found in the secreted. It localises to the target cell membrane. Functionally, antibacterial peptide with moderate activity against the Gram-positive bacteria (S.aureus ATCC 25923, MIC=25 uM), but not against all other bacteria (both Gram-positive and Gram-negative) tested. Does not show activity against fungi, and against Leishmania species. It adopts an alpha-helical structure with very low amphipathicity in membrane environments. This chain is Medusin-S1, found in Phyllomedusa sauvagei (Sauvage's leaf frog).